The following is a 253-amino-acid chain: Fatty acid elongase 5 (253 aa).

Helical transmembrane passes span 24-44, 60-80, 100-120, 127-147, 150-170, 188-208, and 214-234; these read IFVS…LVII, IMMI…ISLA, FWIF…VLMI, QLSF…GLLL, GIGN…HFLM, ILTK…SLAP, and FALQ…ILFL. The HxxHH motif motif lies at 132 to 136; the sequence is HIYHH. The active-site Nucleophile is His-135.

It belongs to the ELO family.

It is found in the membrane. The enzyme catalyses an acyl-CoA + malonyl-CoA + H(+) = a 3-oxoacyl-CoA + CO2 + CoA. It participates in lipid metabolism; polyunsaturated fatty acid biosynthesis. In terms of biological role, involved in the synthesis of fatty acids. Elongates C20 polyunsaturated fatty acids (PUFAs) with a preference for n-6 PUFAs. This Trypanosoma cruzi (strain CL Brener) protein is Fatty acid elongase 5.